A 157-amino-acid chain; its full sequence is F-box protein SNE (157 aa).

An F-box domain is found at 24-70; the sequence is PVFSINDHHDVLVEILRRLDGSSLCSAACVCRLWSAVARNDSIWEEL.

As to quaternary structure, part of a SCF (ASK-cullin-F-box) protein ligase complex. Interacts directly with SKP1A and SKP1B. In terms of tissue distribution, highly expressed in flowers and at much lower level in seedlings, rosette leaves and green siliques.

It localises to the nucleus. Its pathway is protein modification; protein ubiquitination. Functionally, essential component of a SCF-type E3 ligase complex that positively regulates the gibberellin signaling pathway. Upon gibberellin treatment, such complex probably mediates the ubiquitination and subsequent degradation of DELLA proteins (GAI, RGA and RGL2), some repressors of the gibberellin pathway, leading to activate the pathway. Can partially complement the absence of GID2/SLY1. The sequence is that of F-box protein SNE (SNE) from Arabidopsis thaliana (Mouse-ear cress).